The following is a 225-amino-acid chain: Thymidylate kinase (225 aa).

ATP is bound at residue 15–22 (GGEGSGKS).

This sequence belongs to the thymidylate kinase family.

It carries out the reaction dTMP + ATP = dTDP + ADP. Its function is as follows. Phosphorylation of dTMP to form dTDP in both de novo and salvage pathways of dTTP synthesis. In Protochlamydia amoebophila (strain UWE25), this protein is Thymidylate kinase.